The primary structure comprises 82 residues: Small ribosomal subunit protein uS17 (82 aa).

It belongs to the universal ribosomal protein uS17 family. As to quaternary structure, part of the 30S ribosomal subunit.

In terms of biological role, one of the primary rRNA binding proteins, it binds specifically to the 5'-end of 16S ribosomal RNA. The protein is Small ribosomal subunit protein uS17 of Shewanella denitrificans (strain OS217 / ATCC BAA-1090 / DSM 15013).